A 155-amino-acid polypeptide reads, in one-letter code: MAKGSGKVLAQNKKAGHDYFIEDTIEAGMVLTGTEIKSIRAGKAQLKDSYVRITNGEAWISNMHVSPFDQGNRFNHDPLRARKLLLHKKQIGELVGAVKRDGYTIVPLKMYIKDGYAKLLIGVGKGKKDYDKRNDMRKKEAKREMERTFKSKNQY.

Over residues 127–149 (KKDYDKRNDMRKKEAKREMERTF) the composition is skewed to basic and acidic residues. The interval 127 to 155 (KKDYDKRNDMRKKEAKREMERTFKSKNQY) is disordered.

It belongs to the SmpB family.

Its subcellular location is the cytoplasm. Functionally, required for rescue of stalled ribosomes mediated by trans-translation. Binds to transfer-messenger RNA (tmRNA), required for stable association of tmRNA with ribosomes. tmRNA and SmpB together mimic tRNA shape, replacing the anticodon stem-loop with SmpB. tmRNA is encoded by the ssrA gene; the 2 termini fold to resemble tRNA(Ala) and it encodes a 'tag peptide', a short internal open reading frame. During trans-translation Ala-aminoacylated tmRNA acts like a tRNA, entering the A-site of stalled ribosomes, displacing the stalled mRNA. The ribosome then switches to translate the ORF on the tmRNA; the nascent peptide is terminated with the 'tag peptide' encoded by the tmRNA and targeted for degradation. The ribosome is freed to recommence translation, which seems to be the essential function of trans-translation. The chain is SsrA-binding protein from Lysinibacillus sphaericus (strain C3-41).